Here is a 90-residue protein sequence, read N- to C-terminus: uncharacterized protein (90 aa).

Residues 53–90 are disordered; it reads WRARPDANDADTTSSSSSSETCTESDDSSDVPPARYAV. Residues 63–74 show a composition bias toward low complexity; that stretch reads DTTSSSSSSETC.

This is an uncharacterized protein from Orgyia pseudotsugata (Douglas-fir tussock moth).